The following is a 559-amino-acid chain: MKSICCVLVLCLLLCRRSTASESICELKDVSGNSNDWIVLREKPLGCWTDFQTENGTEVHIINLEDNPSVFTVNLLKANKSVVIFTSSSAQSSHAMLFDNPAVSIYVTNKTSLTFIHPTQKPLQILTAPPAGNVSAVLRWAAETFGGVTSVTNARNPKTITFTGVKGSQNSSRCELMPETPTEKPFIHLELNEPIEALKSCYMKHEGEKLHIINIPDGVTIRHVSVHLLSDCNVVLRGPAGTHWIIKNSLRIGILSNNQIHLQSFPLRPRMAISDNPTDIRQKALSYFSSGFISSYSEIRLNVTNVELWITDYSISSAPTEVEKTTPSPTSPPFPVQMQLFSSPDFTTPIDNNSRVLSDKRVYAEISSQTFREASIRVSSCWVRSTPVTREMPFREEPCFIKDCPKRLSFSFQILQDLPAGSWDLECAVKLCGVKRINNEESCTSETPVKRNVQVKPFTPTTNSCFEFGLSAVLGIAFGGFLIGVLLTGALWFIKIRTGHPVALGMRSTAAELSVLSISGCPCGLTKRQPVPTHPSPSENSSANASIGSTQSTPTSSMA.

Positions methionine 1–alanine 20 are cleaved as a signal peptide. Over serine 21–valine 473 the chain is Extracellular. Intrachain disulfides connect cysteine 25–cysteine 201 and cysteine 47–cysteine 174. N-linked (GlcNAc...) asparagine glycans are attached at residues asparagine 55, asparagine 79, asparagine 109, asparagine 133, asparagine 170, asparagine 302, and asparagine 352. Cysteine 381 and cysteine 427 are joined by a disulfide. Residues leucine 474–isoleucine 494 form a helical membrane-spanning segment. Residues lysine 495 to alanine 559 lie on the Cytoplasmic side of the membrane. Positions arginine 528 to alanine 559 are disordered. The segment covering serine 536–serine 546 has biased composition (low complexity). Positions isoleucine 547–alanine 559 are enriched in polar residues.

Homodimer; disulfide-linked.

Its subcellular location is the cell membrane. Vascular endothelium glycoprotein that plays an important role in the regulation of angiogenesis. Required for normal structure and integrity of adult vasculature. Important for endothelial cell shape changes in response to blood flow, which drive vascular remodeling and establishment of normal vascular morphology during angiogenesis. The sequence is that of Endoglin from Danio rerio (Zebrafish).